A 143-amino-acid chain; its full sequence is Ribonuclease HI (143 aa).

Positions 1-136 constitute an RNase H type-1 domain; it reads MQEIEIFCDG…CDSLAKLEAQ (136 aa). Mg(2+) contacts are provided by D9, E47, D69, and D128.

This sequence belongs to the RNase H family. As to quaternary structure, monomer. Mg(2+) is required as a cofactor.

The protein resides in the cytoplasm. It carries out the reaction Endonucleolytic cleavage to 5'-phosphomonoester.. In terms of biological role, endonuclease that specifically degrades the RNA of RNA-DNA hybrids. The polypeptide is Ribonuclease HI (rnhA) (Helicobacter pylori (strain ATCC 700392 / 26695) (Campylobacter pylori)).